Consider the following 148-residue polypeptide: Natriuretic peptide BF131 (148 aa).

Residues 1-27 (MVGPSRLAGGGLLLLLLLALLPLALDG) form the signal peptide. Positions 28-83 (KPAPPPQALPKDPAAASAAERIMRALLPDSKSSRPATDRMVHPEHQAGGGDTRRLQ) are excised as a propeptide. Disordered regions lie at residues 54 to 83 (LPDS…RRLQ) and 105 to 127 (TSDM…PSAA). The segment covering 63–83 (ATDRMVHPEHQAGGGDTRRLQ) has biased composition (basic and acidic residues). Cys-94 and Cys-110 are disulfide-bonded. The propeptide occupies 130 to 148 (AVTWLIRDLRADSKQSRAA).

The protein belongs to the natriuretic peptide family. Expressed by the venom gland.

The protein localises to the secreted. In terms of biological role, natriuretic peptide that dose-dependently induces the rapid relaxation of rat aortic strips phenylephrine-precontracted. Acts by stimulating cGMP production in a dose-dependent manner (by probably activating NPR1 and/or NPR2). May also show potent hypotensive effects. The protein is Natriuretic peptide BF131 of Bungarus flaviceps flaviceps (Red-headed krait).